The sequence spans 232 residues: Lipoprotein-releasing system ATP-binding protein LolD (232 aa).

The 221-residue stretch at 11 to 231 folds into the ABC transporter domain; it reads VYLHDIKREY…SLENGHVVEL (221 aa). 47–54 contacts ATP; it reads APSGSGKS.

This sequence belongs to the ABC transporter superfamily. Lipoprotein translocase (TC 3.A.1.125) family. As to quaternary structure, the complex is composed of two ATP-binding proteins (LolD) and two transmembrane proteins (LolC and LolE).

It localises to the cell inner membrane. Functionally, part of the ABC transporter complex LolCDE involved in the translocation of mature outer membrane-directed lipoproteins, from the inner membrane to the periplasmic chaperone, LolA. Responsible for the formation of the LolA-lipoprotein complex in an ATP-dependent manner. The sequence is that of Lipoprotein-releasing system ATP-binding protein LolD from Nitrobacter winogradskyi (strain ATCC 25391 / DSM 10237 / CIP 104748 / NCIMB 11846 / Nb-255).